Reading from the N-terminus, the 401-residue chain is Mannonate dehydratase (401 aa).

The protein belongs to the mannonate dehydratase family. Fe(2+) serves as cofactor. Mn(2+) is required as a cofactor.

The catalysed reaction is D-mannonate = 2-dehydro-3-deoxy-D-gluconate + H2O. It participates in carbohydrate metabolism; pentose and glucuronate interconversion. Its function is as follows. Catalyzes the dehydration of D-mannonate. The protein is Mannonate dehydratase of Brucella canis (strain ATCC 23365 / NCTC 10854 / RM-666).